The following is a 332-amino-acid chain: Ferredoxin--NADP reductase (332 aa).

Residues Thr20, Glu39, Gln47, Tyr52, Val92, Phe126, Asp288, and Thr329 each coordinate FAD.

The protein belongs to the ferredoxin--NADP reductase type 2 family. As to quaternary structure, homodimer. FAD serves as cofactor.

The catalysed reaction is 2 reduced [2Fe-2S]-[ferredoxin] + NADP(+) + H(+) = 2 oxidized [2Fe-2S]-[ferredoxin] + NADPH. The sequence is that of Ferredoxin--NADP reductase from Geobacillus kaustophilus (strain HTA426).